Reading from the N-terminus, the 227-residue chain is MAYPFQLGLQDATSPIMEELLHFHDHTLMIVFLISSLVLYIISLMLTTKLTHTSTMDAQEVETVWTILPAIILILIALPSLRILYMMDEINNPSLTVKTVGHQWYWSYEYTDYEDLNFDSYMIPTQELKPGELRLLEVDNRVVLPMEMTVRMLISSEDVLHSWAVPSLGLKTDAIPGRLNQTTLMAMRPGLYYGQCSEICGSNHSFMPIVLEMVPLSYFETWSAVMV.

Residues 1 to 14 (MAYPFQLGLQDATS) lie on the Mitochondrial intermembrane side of the membrane. Residues 15–45 (PIMEELLHFHDHTLMIVFLISSLVLYIISLM) traverse the membrane as a helical segment. At 46 to 59 (LTTKLTHTSTMDAQ) the chain is on the mitochondrial matrix side. A helical transmembrane segment spans residues 60–87 (EVETVWTILPAIILILIALPSLRILYMM). Residues 88–227 (DEINNPSLTV…YFETWSAVMV (140 aa)) lie on the Mitochondrial intermembrane side of the membrane. Residues His161, Cys196, Glu198, Cys200, His204, and Met207 each coordinate Cu cation. Glu198 provides a ligand contact to Mg(2+). At Tyr218 the chain carries Phosphotyrosine.

This sequence belongs to the cytochrome c oxidase subunit 2 family. As to quaternary structure, component of the cytochrome c oxidase (complex IV, CIV), a multisubunit enzyme composed of 14 subunits. The complex is composed of a catalytic core of 3 subunits MT-CO1, MT-CO2 and MT-CO3, encoded in the mitochondrial DNA, and 11 supernumerary subunits COX4I, COX5A, COX5B, COX6A, COX6B, COX6C, COX7A, COX7B, COX7C, COX8 and NDUFA4, which are encoded in the nuclear genome. The complex exists as a monomer or a dimer and forms supercomplexes (SCs) in the inner mitochondrial membrane with NADH-ubiquinone oxidoreductase (complex I, CI) and ubiquinol-cytochrome c oxidoreductase (cytochrome b-c1 complex, complex III, CIII), resulting in different assemblies (supercomplex SCI(1)III(2)IV(1) and megacomplex MCI(2)III(2)IV(2)). Found in a complex with TMEM177, COA6, COX18, COX20, SCO1 and SCO2. Interacts with TMEM177 in a COX20-dependent manner. Interacts with COX20. Interacts with COX16. The cofactor is Cu cation.

It is found in the mitochondrion inner membrane. It catalyses the reaction 4 Fe(II)-[cytochrome c] + O2 + 8 H(+)(in) = 4 Fe(III)-[cytochrome c] + 2 H2O + 4 H(+)(out). In terms of biological role, component of the cytochrome c oxidase, the last enzyme in the mitochondrial electron transport chain which drives oxidative phosphorylation. The respiratory chain contains 3 multisubunit complexes succinate dehydrogenase (complex II, CII), ubiquinol-cytochrome c oxidoreductase (cytochrome b-c1 complex, complex III, CIII) and cytochrome c oxidase (complex IV, CIV), that cooperate to transfer electrons derived from NADH and succinate to molecular oxygen, creating an electrochemical gradient over the inner membrane that drives transmembrane transport and the ATP synthase. Cytochrome c oxidase is the component of the respiratory chain that catalyzes the reduction of oxygen to water. Electrons originating from reduced cytochrome c in the intermembrane space (IMS) are transferred via the dinuclear copper A center (CU(A)) of subunit 2 and heme A of subunit 1 to the active site in subunit 1, a binuclear center (BNC) formed by heme A3 and copper B (CU(B)). The BNC reduces molecular oxygen to 2 water molecules using 4 electrons from cytochrome c in the IMS and 4 protons from the mitochondrial matrix. In Lycalopex sechurae (Sechuran desert fox), this protein is Cytochrome c oxidase subunit 2 (MT-CO2).